The following is a 175-amino-acid chain: Peptide deformylase (175 aa).

Fe cation contacts are provided by Cys-98 and His-140. Glu-141 is an active-site residue. His-144 is a binding site for Fe cation.

It belongs to the polypeptide deformylase family. The cofactor is Fe(2+).

It catalyses the reaction N-terminal N-formyl-L-methionyl-[peptide] + H2O = N-terminal L-methionyl-[peptide] + formate. Removes the formyl group from the N-terminal Met of newly synthesized proteins. Requires at least a dipeptide for an efficient rate of reaction. N-terminal L-methionine is a prerequisite for activity but the enzyme has broad specificity at other positions. This chain is Peptide deformylase, found in Bradyrhizobium sp. (strain BTAi1 / ATCC BAA-1182).